Here is a 398-residue protein sequence, read N- to C-terminus: Phosphoglycerate kinase (398 aa).

Residues Asp-21–Asn-23, Arg-37, His-60–Arg-63, Arg-117, and Arg-157 contribute to the substrate site. ATP is bound by residues Glu-332 and Gly-357–Thr-360.

This sequence belongs to the phosphoglycerate kinase family. In terms of assembly, monomer.

The protein localises to the cytoplasm. The catalysed reaction is (2R)-3-phosphoglycerate + ATP = (2R)-3-phospho-glyceroyl phosphate + ADP. It participates in carbohydrate degradation; glycolysis; pyruvate from D-glyceraldehyde 3-phosphate: step 2/5. The sequence is that of Phosphoglycerate kinase from Halobacterium salinarum (strain ATCC 29341 / DSM 671 / R1).